A 432-amino-acid chain; its full sequence is Lecithin-cholesterol acyltransferase-like 1 (432 aa).

A helical membrane pass occupies residues His7–Ser29. Ser209 acts as the Acyl-ester intermediate in catalysis. Catalysis depends on charge relay system residues Asp374 and His400.

The protein belongs to the AB hydrolase superfamily. Lipase family.

Its subcellular location is the membrane. The polypeptide is Lecithin-cholesterol acyltransferase-like 1 (LCAT1) (Arabidopsis thaliana (Mouse-ear cress)).